The sequence spans 273 residues: Vitamin B12-binding protein (273 aa).

The N-terminal stretch at 1 to 18 is a signal peptide; that stretch reads MMKTLSSLLLLFSVSLQA. One can recognise a Fe/B12 periplasmic-binding domain in the interval 23–273; that stretch reads RVISLAPHAT…EHFASIEQKR (251 aa). Cys183 and Cys263 are oxidised to a cystine.

It belongs to the BtuF family. As to quaternary structure, the complex is composed of two ATP-binding proteins (BtuD), two transmembrane proteins (BtuC) and a solute-binding protein (BtuF).

Its subcellular location is the periplasm. Part of the ABC transporter complex BtuCDF involved in vitamin B12 import. Binds vitamin B12 and delivers it to the periplasmic surface of BtuC. This chain is Vitamin B12-binding protein, found in Vibrio vulnificus (strain YJ016).